The chain runs to 385 residues: 1-deoxy-D-xylulose 5-phosphate reductoisomerase 1 (385 aa).

6 residues coordinate NADPH: T11, G12, S13, I14, N39, and N122. Residue K123 participates in 1-deoxy-D-xylulose 5-phosphate binding. E124 is a binding site for NADPH. D148 serves as a coordination point for Mn(2+). 1-deoxy-D-xylulose 5-phosphate-binding residues include S149, E150, S174, and H197. E150 contributes to the Mn(2+) binding site. Residue G203 coordinates NADPH. S210, N215, K216, and E219 together coordinate 1-deoxy-D-xylulose 5-phosphate. E219 serves as a coordination point for Mn(2+).

It belongs to the DXR family. Mg(2+) is required as a cofactor. Requires Mn(2+) as cofactor.

It catalyses the reaction 2-C-methyl-D-erythritol 4-phosphate + NADP(+) = 1-deoxy-D-xylulose 5-phosphate + NADPH + H(+). It functions in the pathway isoprenoid biosynthesis; isopentenyl diphosphate biosynthesis via DXP pathway; isopentenyl diphosphate from 1-deoxy-D-xylulose 5-phosphate: step 1/6. In terms of biological role, catalyzes the NADPH-dependent rearrangement and reduction of 1-deoxy-D-xylulose-5-phosphate (DXP) to 2-C-methyl-D-erythritol 4-phosphate (MEP). This chain is 1-deoxy-D-xylulose 5-phosphate reductoisomerase 1, found in Bacillus anthracis.